A 242-amino-acid chain; its full sequence is Pyridoxine 5'-phosphate synthase (242 aa).

Asn7 provides a ligand contact to 3-amino-2-oxopropyl phosphate. Position 9-10 (9-10 (DH)) interacts with 1-deoxy-D-xylulose 5-phosphate. Residue Arg18 participates in 3-amino-2-oxopropyl phosphate binding. The active-site Proton acceptor is the His43. Arg45 and His50 together coordinate 1-deoxy-D-xylulose 5-phosphate. Glu70 (proton acceptor) is an active-site residue. Residue Thr100 participates in 1-deoxy-D-xylulose 5-phosphate binding. The Proton donor role is filled by His191. 3-amino-2-oxopropyl phosphate is bound by residues Gly192 and 213–214 (GH).

The protein belongs to the PNP synthase family. Homooctamer; tetramer of dimers.

Its subcellular location is the cytoplasm. It catalyses the reaction 3-amino-2-oxopropyl phosphate + 1-deoxy-D-xylulose 5-phosphate = pyridoxine 5'-phosphate + phosphate + 2 H2O + H(+). Its pathway is cofactor biosynthesis; pyridoxine 5'-phosphate biosynthesis; pyridoxine 5'-phosphate from D-erythrose 4-phosphate: step 5/5. Its function is as follows. Catalyzes the complicated ring closure reaction between the two acyclic compounds 1-deoxy-D-xylulose-5-phosphate (DXP) and 3-amino-2-oxopropyl phosphate (1-amino-acetone-3-phosphate or AAP) to form pyridoxine 5'-phosphate (PNP) and inorganic phosphate. This chain is Pyridoxine 5'-phosphate synthase, found in Chromobacterium violaceum (strain ATCC 12472 / DSM 30191 / JCM 1249 / CCUG 213 / NBRC 12614 / NCIMB 9131 / NCTC 9757 / MK).